A 473-amino-acid chain; its full sequence is Photosystem II CP43 reaction center protein (473 aa).

The propeptide occupies 1 to 14; that stretch reads MKTLYSPRRFYPVE. An N-acetylthreonine modification is found at T15. At T15 the chain carries Phosphothreonine. 5 consecutive transmembrane segments (helical) span residues 69 to 93, 134 to 155, 178 to 200, 255 to 275, and 291 to 312; these read LFEV…PHLA, LLGP…KDRN, KALY…RKIS, KPFA…LSYS, and WFNN…ASQA. Residue E367 coordinates [CaMn4O5] cluster. The chain crosses the membrane as a helical span at residues 447–471; sequence RARAAAAGFEKGIDRDLEPVLFMTP.

The protein belongs to the PsbB/PsbC family. PsbC subfamily. PSII is composed of 1 copy each of membrane proteins PsbA, PsbB, PsbC, PsbD, PsbE, PsbF, PsbH, PsbI, PsbJ, PsbK, PsbL, PsbM, PsbT, PsbX, PsbY, PsbZ, Psb30/Ycf12, at least 3 peripheral proteins of the oxygen-evolving complex and a large number of cofactors. It forms dimeric complexes. Binds multiple chlorophylls and provides some of the ligands for the Ca-4Mn-5O cluster of the oxygen-evolving complex. It may also provide a ligand for a Cl- that is required for oxygen evolution. PSII binds additional chlorophylls, carotenoids and specific lipids. is required as a cofactor.

Its subcellular location is the plastid. The protein localises to the chloroplast thylakoid membrane. One of the components of the core complex of photosystem II (PSII). It binds chlorophyll and helps catalyze the primary light-induced photochemical processes of PSII. PSII is a light-driven water:plastoquinone oxidoreductase, using light energy to abstract electrons from H(2)O, generating O(2) and a proton gradient subsequently used for ATP formation. The protein is Photosystem II CP43 reaction center protein of Ranunculus macranthus (Large buttercup).